The sequence spans 114 residues: uncharacterized protein (114 aa).

Cys-10 is an active-site residue.

Belongs to the ArsC family.

This is an uncharacterized protein from Haemophilus influenzae (strain ATCC 51907 / DSM 11121 / KW20 / Rd).